Reading from the N-terminus, the 200-residue chain is dTDP-4-dehydrorhamnose 3,5-epimerase (200 aa).

Substrate contacts are provided by residues R21, E26, 45-47, and R57; that span reads QVN. The active-site Proton acceptor is H60. Substrate-binding residues include K70 and H116. The active-site Proton donor is the Y129. Residues E140 and K165 each coordinate substrate.

Belongs to the dTDP-4-dehydrorhamnose 3,5-epimerase family.

The enzyme catalyses dTDP-4-dehydro-6-deoxy-alpha-D-glucose = dTDP-4-dehydro-beta-L-rhamnose. Its pathway is carbohydrate biosynthesis; dTDP-L-rhamnose biosynthesis. The protein operates within antibiotic biosynthesis; streptomycin biosynthesis. In terms of biological role, involved in the biosynthesis of the dihydrostreptose moiety of streptomycin. Catalyzes the epimerization of the C3' and C5'positions of dTDP-6-deoxy-D-xylo-4-hexulose, forming dTDP-6-deoxy-L-lyxo-4-hexulose. This chain is dTDP-4-dehydrorhamnose 3,5-epimerase, found in Streptomyces griseus.